A 149-amino-acid chain; its full sequence is Urease accessory protein UreE (149 aa).

Belongs to the UreE family.

The protein localises to the cytoplasm. Involved in urease metallocenter assembly. Binds nickel. Probably functions as a nickel donor during metallocenter assembly. The chain is Urease accessory protein UreE from Prochlorococcus marinus (strain MIT 9312).